A 253-amino-acid polypeptide reads, in one-letter code: Testis-expressed protein 101 (253 aa).

Positions 1 to 24 are cleaved as a signal peptide; it reads MAACWVHYLLLLLLGVSHQTLAQS. N44, N112, N117, N121, and N162 each carry an N-linked (GlcNAc...) asparagine glycan. Positions 53–117 constitute a UPAR/Ly6 1 domain; it reads ETCNPGELCQ…SNYCNSSLCN (65 aa). Positions 143–218 constitute a UPAR/Ly6 2 domain; sequence CPTCVALGSC…KETCSYHSLL (76 aa). S226 is lipidated: GPI-anchor amidated serine. The propeptide at 227 to 253 is removed in mature form; the sequence is RASGRSTSLWVLELLLPAVLVALTHFP.

As to quaternary structure, interacts with VAMP3. Interacts with LY6K. Interacts with DPEP3; co-localized on the cell surface of spermatocytes, spermatids, and testicular spermatozoa, co-localized only in cytoplasmic droplets of caput and corpus epididymal sperm. Interacts with ADAM5. Post-translationally, N-glycosylated; by high mannose and/or biantennary complex and/or certain types of hybrid oligosaccharides; possesses different oligosaccharides chains according to its subcellular localization in the testis. In terms of processing, sheds from membrane raft by ACE and released from the cell surface of epididymal sperm while it passes through the caput epididymis leading to disappearance of TEX101 on spermatozoa; is essential to produce fertile spermatozoa.

The protein localises to the cell membrane. It is found in the membrane raft. Its subcellular location is the cytoplasmic vesicle. The protein resides in the secretory vesicle. It localises to the acrosome. The protein localises to the secreted. Plays a role in fertilization by controlling binding of sperm to zona pellucida and migration of spermatozoa into the oviduct. May play a role in signal transduction and promote protein tyrosine phosphorylation. This is Testis-expressed protein 101 from Cricetulus griseus (Chinese hamster).